A 124-amino-acid chain; its full sequence is Large ribosomal subunit protein uL18 (124 aa).

Belongs to the universal ribosomal protein uL18 family. As to quaternary structure, part of the 50S ribosomal subunit; part of the 5S rRNA/L5/L18/L25 subcomplex. Contacts the 5S and 23S rRNAs.

Functionally, this is one of the proteins that bind and probably mediate the attachment of the 5S RNA into the large ribosomal subunit, where it forms part of the central protuberance. The chain is Large ribosomal subunit protein uL18 from Koribacter versatilis (strain Ellin345).